A 275-amino-acid chain; its full sequence is Phosphate import ATP-binding protein PstB (275 aa).

The region spanning 29–270 (VSVRDLNFYY…PTDRRTQDYI (242 aa)) is the ABC transporter domain. 61-68 (GPSGCGKS) contacts ATP.

Belongs to the ABC transporter superfamily. Phosphate importer (TC 3.A.1.7) family. In terms of assembly, the complex is composed of two ATP-binding proteins (PstB), two transmembrane proteins (PstC and PstA) and a solute-binding protein (PstS).

Its subcellular location is the cell inner membrane. It carries out the reaction phosphate(out) + ATP + H2O = ADP + 2 phosphate(in) + H(+). Part of the ABC transporter complex PstSACB involved in phosphate import. Responsible for energy coupling to the transport system. This is Phosphate import ATP-binding protein PstB from Rhodopseudomonas palustris (strain BisB18).